Consider the following 305-residue polypeptide: tRNA uridine(34) hydroxylase (305 aa).

The 95-residue stretch at 125-219 folds into the Rhodanese domain; it reads ADENTVVVDK…YLEEVPREQS (95 aa). C179 acts as the Cysteine persulfide intermediate in catalysis.

This sequence belongs to the TrhO family.

The enzyme catalyses uridine(34) in tRNA + AH2 + O2 = 5-hydroxyuridine(34) in tRNA + A + H2O. Its function is as follows. Catalyzes oxygen-dependent 5-hydroxyuridine (ho5U) modification at position 34 in tRNAs. This is tRNA uridine(34) hydroxylase from Brucella abortus (strain S19).